We begin with the raw amino-acid sequence, 431 residues long: Histidine--tRNA ligase (431 aa).

Belongs to the class-II aminoacyl-tRNA synthetase family. Homodimer.

The protein localises to the cytoplasm. It carries out the reaction tRNA(His) + L-histidine + ATP = L-histidyl-tRNA(His) + AMP + diphosphate + H(+). The chain is Histidine--tRNA ligase from Neisseria meningitidis serogroup C (strain 053442).